Consider the following 436-residue polypeptide: Elongation factor 1-gamma-A (436 aa).

The GST N-terminal domain occupies 2–87 (AGGTLYTYPD…YVGNDELRGT (86 aa)). The region spanning 88 to 221 (TRLHQAQVIQ…KMAQFDAKKF (134 aa)) is the GST C-terminal domain. Basic and acidic residues-rich tracts occupy residues 221–249 (FAEMQPKKETPKKEKPAKEPKKEKEEKKK) and 265–278 (SEKALAAEPKSKDP). Residues 221–278 (FAEMQPKKETPKKEKPAKEPKKEKEEKKKAAPTPAPAPEDDLDESEKALAAEPKSKDP) are disordered. The region spanning 275–436 (SKDPYAHLPK…KPFNQGKIFK (162 aa)) is the EF-1-gamma C-terminal domain.

As to quaternary structure, EF-1 is composed of four subunits: alpha, beta, delta, and gamma. Post-translationally, phosphorylated by CDK1. In terms of processing, the N-terminus is blocked.

Its function is as follows. Probably plays a role in anchoring the complex to other cellular components. The sequence is that of Elongation factor 1-gamma-A (eef1g-a) from Xenopus laevis (African clawed frog).